Consider the following 63-residue polypeptide: Cecropin-A1 (63 aa).

A signal peptide spans 1 to 23; that stretch reads MNFYNIFVFVALILAITIGQSEA. At R62 the chain carries Arginine amide.

This sequence belongs to the cecropin family.

Its subcellular location is the secreted. Cecropins have lytic and antibacterial activity against several Gram-positive and Gram-negative bacteria. The protein is Cecropin-A1 (CecA1) of Drosophila sechellia (Fruit fly).